The sequence spans 82 residues: Sulfur carrier protein TusA (82 aa).

The active-site Cysteine persulfide intermediate is the cysteine 19.

Belongs to the sulfur carrier protein TusA family.

Its subcellular location is the cytoplasm. In terms of biological role, sulfur carrier protein which probably makes part of a sulfur-relay system. This is Sulfur carrier protein TusA from Vibrio campbellii (strain ATCC BAA-1116).